A 250-amino-acid chain; its full sequence is Triosephosphate isomerase (250 aa).

9–11 (NWK) contacts substrate. Histidine 96 (electrophile) is an active-site residue. The active-site Proton acceptor is glutamate 168. Residues glycine 174, serine 216, and 237 to 238 (GG) contribute to the substrate site.

This sequence belongs to the triosephosphate isomerase family. Homodimer.

The protein localises to the cytoplasm. The catalysed reaction is D-glyceraldehyde 3-phosphate = dihydroxyacetone phosphate. Its pathway is carbohydrate biosynthesis; gluconeogenesis. It functions in the pathway carbohydrate degradation; glycolysis; D-glyceraldehyde 3-phosphate from glycerone phosphate: step 1/1. In terms of biological role, involved in the gluconeogenesis. Catalyzes stereospecifically the conversion of dihydroxyacetone phosphate (DHAP) to D-glyceraldehyde-3-phosphate (G3P). In Leptospira interrogans serogroup Icterohaemorrhagiae serovar copenhageni (strain Fiocruz L1-130), this protein is Triosephosphate isomerase.